A 2587-amino-acid polypeptide reads, in one-letter code: Clavatol synthase claF (2587 aa).

An N-terminal acylcarrier protein transacylase domain (SAT) region spans residues 93–256 (LLSPLVVIVQ…TEVALSGRFH (164 aa)). Cysteine 137 (nucleophile; for transacylase activity) is an active-site residue. Histidine 256 acts as the Proton donor/acceptor; for transacylase activity in catalysis. Positions 383–799 (DDQIAVIGMA…GSNASMIITQ (417 aa)) constitute a Ketosynthase family 3 (KS3) domain. Residues cysteine 548, histidine 683, and histidine 722 each act as for beta-ketoacyl synthase activity in the active site. The segment at 912–1222 (CFGGQISTYV…ESLPLLAEAT (311 aa)) is malonyl-CoA:ACP transacylase (MAT) domain. The segment at 1284–1416 (PKGLTTFIGF…GSIVFLPASD (133 aa)) is N-terminal hotdog fold. The 312-residue stretch at 1284–1595 (PKGLTTFIGF…YRLVPMDSMR (312 aa)) folds into the PKS/mFAS DH domain. The interval 1315 to 1593 (LTSANVALNT…ISYRLVPMDS (279 aa)) is product template (PT) domain. The tract at residues 1436 to 1595 (ASLLQGNGAD…YRLVPMDSMR (160 aa)) is C-terminal hotdog fold. Residues 1609-1635 (STAAVSSKSTPVHAPTPTTTVSSTPSS) are disordered. The span at 1617-1635 (STPVHAPTPTTTVSSTPSS) shows a compositional bias: low complexity. The 75-residue stretch at 1654–1728 (PDISAKMCEI…SLVSCIRSTL (75 aa)) folds into the Carrier domain. Residue serine 1688 is modified to O-(pantetheine 4'-phosphoryl)serine. Residues tyrosine 1947, histidine 2059, and glutamate 2085 each act as for methyltransferase activity in the active site. The segment at 1952 to 2126 (VNTVWIKQLE…ATYWEKVLQS (175 aa)) is methyltransferase (CMeT) domain. Residues 2208-2452 (SLSSGQCVLV…KILPELDGTL (245 aa)) form an NADPH-binding (R) domain region.

Requires pantetheine 4'-phosphate as cofactor.

It catalyses the reaction 3 malonyl-CoA + acetyl-CoA + AH2 + 2 S-adenosyl-L-methionine + H(+) = clavatol + A + 2 S-adenosyl-L-homocysteine + 3 CO2 + 4 CoA + H2O. It functions in the pathway secondary metabolite biosynthesis. Functionally, non-reducing polyketide synthase; part of the cla gene cluster that produces clavatol and ortho-quinone methide. The clavatol biosynthesis cluster cla and the terrestric acid cluster tra are both involved in the production of peniphenones and penilactones. The non-reducing PKS claF is responsible for the formation of clavatol from successive condensations of 3 malonyl-CoA units, presumably with a simple acetyl-CoA starter unit, and 2 methylation steps. The esterase claE probably collaborates with claF by catalyzing the hydrolysis of ACP-bound acyl intermediates to free the ACP from stalled intermediates. The clavatol oxidase claD then converts clavatol to hydroxyclavatol. Spontaneous dehydration of hydroxyclavatol leads to the accumulation of the highly active ortho-quinone methide. On the other hand, the PKS-NRPS hybrid traA is involved in the formation of crustosic acid, with the help of traB and traD. The polyketide synthase module (PKS) of traA is responsible for the synthesis of the polyketide backbone via the condensation of an acetyl-CoA starter unit with 3 malonyl-CoA units. The downstream nonribosomal peptide synthetase (NRPS) module then amidates the carboxyl end of the polyketide with L-malic acid. Because traA lacks a designated enoylreductase (ER) domain, the required activity is provided the enoyl reductase traG. Crustosic acid undergoes decarboxylation and isomerization to the terrestric acid, catalyzed by the 2-oxoglutarate-dependent dioxygenase traH. Both acids are further converted to the 2 gamma-butyrolactones (R)-5-methyltetronic acid and (S)-5-carboxylmethyltetronic acid, with involvement of the cytochrome P450 monooxygenase claJ. Spontaneous addition of the methide to these gamma-butyrolactones leads to peniphenone D and penilactone D, which undergo again stereospecific attacking by methide to give penilactones A and B. This chain is Clavatol synthase claF, found in Penicillium crustosum (Blue mold fungus).